The chain runs to 1330 residues: G2/mitotic-specific cyclin-B3 (1330 aa).

Positions 1-50 are disordered; sequence MPLPLPSRSSKPETKKSRSSKIVPSGNNGQSEKRGENYQEKISSSSPRRL. A compositionally biased stretch (polar residues) spans 20–30; it reads SKIVPSGNNGQ. Positions 54-62 match the D-box motif; the sequence is RSAFEDLTN. Residues 1002 to 1059 form a disordered region; that stretch reads VETSSRVPSTPPESRAGMSSVGKLSTTSKSSVCESSSNKPSSSWGESSQKEMTPLEDI. Residues 1026 to 1048 show a composition bias toward low complexity; it reads STTSKSSVCESSSNKPSSSWGES.

This sequence belongs to the cyclin family. Cyclin AB subfamily. In terms of assembly, interacts with CDK2 kinase. Ubiquitinated. Ubiquitination leads to its degradation during anaphase entry, after degradation of CCNB1.

It is found in the nucleus. Functionally, cyclins are positive regulatory subunits of the cyclin-dependent kinases (CDKs), and thereby play an essential role in the control of the cell cycle, notably via their destruction during cell division. Its tissue specificity suggest that it may be required during early meiotic prophase I. This chain is G2/mitotic-specific cyclin-B3 (CCNB3), found in Canis lupus familiaris (Dog).